The primary structure comprises 93 residues: Putative pterin-4-alpha-carbinolamine dehydratase (93 aa).

It belongs to the pterin-4-alpha-carbinolamine dehydratase family.

The enzyme catalyses (4aS,6R)-4a-hydroxy-L-erythro-5,6,7,8-tetrahydrobiopterin = (6R)-L-erythro-6,7-dihydrobiopterin + H2O. The sequence is that of Putative pterin-4-alpha-carbinolamine dehydratase from Nostoc sp. (strain PCC 7120 / SAG 25.82 / UTEX 2576).